A 281-amino-acid polypeptide reads, in one-letter code: ATP synthase gamma chain (281 aa).

The protein belongs to the ATPase gamma chain family. In terms of assembly, F-type ATPases have 2 components, CF(1) - the catalytic core - and CF(0) - the membrane proton channel. CF(1) has five subunits: alpha(3), beta(3), gamma(1), delta(1), epsilon(1). CF(0) has three main subunits: a, b and c.

Its subcellular location is the cell inner membrane. Its function is as follows. Produces ATP from ADP in the presence of a proton gradient across the membrane. The gamma chain is believed to be important in regulating ATPase activity and the flow of protons through the CF(0) complex. This chain is ATP synthase gamma chain, found in Ehrlichia chaffeensis (strain ATCC CRL-10679 / Arkansas).